The sequence spans 201 residues: Heat shock protein beta-1 (201 aa).

Phosphoserine; by PKA and PKC is present on serine 15. A sHSP domain is found at 83–193; the sequence is ALSRQMSSGM…SETTIPVNVE (111 aa).

Belongs to the small heat shock protein (HSP20) family. As to quaternary structure, homooligomer. Homodimer; becomes monomeric upon activation. Heterooligomer.

Its subcellular location is the cytoplasm. It localises to the nucleus. It is found in the cytoskeleton. The protein resides in the spindle. Its function is as follows. Small heat shock protein which functions as a molecular chaperone probably maintaining denatured proteins in a folding-competent state. Plays a role in stress resistance and actin organization. This chain is Heat shock protein beta-1 (hspb1), found in Poeciliopsis lucida (Desert topminnow).